Consider the following 470-residue polypeptide: 1-aminocyclopropane-1-carboxylate synthase 9 (470 aa).

The substrate site is built by glutamate 47 and tyrosine 85. Position 272 is an N6-(pyridoxal phosphate)lysine (lysine 272).

The protein belongs to the class-I pyridoxal-phosphate-dependent aminotransferase family. In terms of assembly, homodimer and heterodimer. In vivo, the relevance of heterodimerization with other ACS enzymes is however unsure. Interacts (via its C-terminal region) with FEI1, FEI2, ETO1 and EOL1. Pyridoxal 5'-phosphate is required as a cofactor. In terms of processing, may be processed at its C-terminus. Expressed in roots and siliques.

The enzyme catalyses S-adenosyl-L-methionine = 1-aminocyclopropane-1-carboxylate + S-methyl-5'-thioadenosine + H(+). Its pathway is alkene biosynthesis; ethylene biosynthesis via S-adenosyl-L-methionine; ethylene from S-adenosyl-L-methionine: step 1/2. Functionally, 1-aminocyclopropane-1-carboxylate synthase (ACS) enzymes catalyze the conversion of S-adenosyl-L-methionine (SAM) into 1-aminocyclopropane-1-carboxylate (ACC), a direct precursor of ethylene. This Arabidopsis thaliana (Mouse-ear cress) protein is 1-aminocyclopropane-1-carboxylate synthase 9 (ACS9).